Reading from the N-terminus, the 66-residue chain is MWKVNDQGFLNISVTGTKLNLIAITGKLGFYADPPSHLIIMPLKFFPVHKFSKNEPNKKQKRFIYF.

Belongs to the asfivirus I177L family.

Its subcellular location is the virion. The protein is Protein I177L of Ornithodoros (relapsing fever ticks).